A 438-amino-acid polypeptide reads, in one-letter code: MVALAFQGHLNPMLKFAKHLARTNLHFTLATTEQARDLLSSTADEPHRPVDLAFFSDGLPKDDPRDPDTLAKSLKKDGAKNLSKIIEEKRFDCIISVPFTPWVPAVAAAHNIPCAILWIQACGAFSVYYRYYMKTNPFPDLEDLNQTVELPALPLLEVRDLPSLMLPSQGANVNTLMAEFADCLKDVKWVLVNSFYELESEIIESMSDLKPIIPIGPLVSPFLLGNDEEKTLDMWKVDDYCMEWLDKQARSSVVYISFGSILKSLENQVETIATALKNRGVPFLWVIRPKEKGENVQVLQEMVKEGKGVVTEWGQQEKILSHMAISCFITHCGWNSTIETVVTGVPVVAYPTWIDQPLDARLLVDVFGIGVRMKNDAIDGELKVAEVERCIEAVTEGPAAADMRRRATELKHAARSAMSPGGSSAQNLDSFISDIPIT.

UDP-alpha-D-glucose-binding positions include S260, 314–316 (GQQ), 331–339 (HCGWNSTIE), and 353–356 (WIDQ).

This sequence belongs to the UDP-glycosyltransferase family.

This chain is UDP-glycosyltransferase 84B2 (UGT84B2), found in Arabidopsis thaliana (Mouse-ear cress).